The following is a 133-amino-acid chain: Large ribosomal subunit protein bL20 (133 aa).

The protein belongs to the bacterial ribosomal protein bL20 family.

Binds directly to 23S ribosomal RNA and is necessary for the in vitro assembly process of the 50S ribosomal subunit. It is not involved in the protein synthesizing functions of that subunit. The sequence is that of Large ribosomal subunit protein bL20 from Bartonella quintana (strain Toulouse) (Rochalimaea quintana).